The primary structure comprises 530 residues: Putative ABC transporter ATP-binding protein SSO1893 (530 aa).

ABC transporter domains follow at residues 6 to 243 and 282 to 516; these read IRDL…LGLE and ILFA…EPPL. Residues 38–45 and 314–321 contribute to the ATP site; these read GRSGSGKS and GKNGSGKT.

Belongs to the ABC transporter superfamily.

The protein localises to the cell membrane. Its function is as follows. Probably part of an ABC transporter complex. Responsible for energy coupling to the transport system. The sequence is that of Putative ABC transporter ATP-binding protein SSO1893 from Saccharolobus solfataricus (strain ATCC 35092 / DSM 1617 / JCM 11322 / P2) (Sulfolobus solfataricus).